Reading from the N-terminus, the 366-residue chain is Ribosomal RNA large subunit methyltransferase M (366 aa).

Residues S188, 221–224 (CPGG), D240, D260, and D277 each bind S-adenosyl-L-methionine. Residue K306 is the Proton acceptor of the active site.

Belongs to the class I-like SAM-binding methyltransferase superfamily. RNA methyltransferase RlmE family. RlmM subfamily. As to quaternary structure, monomer.

The protein resides in the cytoplasm. It carries out the reaction cytidine(2498) in 23S rRNA + S-adenosyl-L-methionine = 2'-O-methylcytidine(2498) in 23S rRNA + S-adenosyl-L-homocysteine + H(+). Functionally, catalyzes the 2'-O-methylation at nucleotide C2498 in 23S rRNA. This is Ribosomal RNA large subunit methyltransferase M from Photorhabdus asymbiotica subsp. asymbiotica (strain ATCC 43949 / 3105-77) (Xenorhabdus luminescens (strain 2)).